The following is a 267-amino-acid chain: tRNA pseudouridine synthase A (267 aa).

Catalysis depends on Asp-54, which acts as the Nucleophile. Tyr-112 serves as a coordination point for substrate.

The protein belongs to the tRNA pseudouridine synthase TruA family. In terms of assembly, homodimer.

The catalysed reaction is uridine(38/39/40) in tRNA = pseudouridine(38/39/40) in tRNA. Functionally, formation of pseudouridine at positions 38, 39 and 40 in the anticodon stem and loop of transfer RNAs. The sequence is that of tRNA pseudouridine synthase A from Bordetella avium (strain 197N).